Here is a 214-residue protein sequence, read N- to C-terminus: Redox-sensing transcriptional repressor Rex (214 aa).

Positions 16-55 (IYFRYLNVLKDANKQRVSSTELSEAVQVDSATIRRDFSYF) form a DNA-binding region, H-T-H motif. Residue 90 to 95 (GVGSLG) coordinates NAD(+).

It belongs to the transcriptional regulatory Rex family. Homodimer.

The protein localises to the cytoplasm. Modulates transcription in response to changes in cellular NADH/NAD(+) redox state. This Limosilactobacillus reuteri (strain DSM 20016) (Lactobacillus reuteri) protein is Redox-sensing transcriptional repressor Rex.